The following is a 78-amino-acid chain: RNA-binding protein Hfq (78 aa).

The Sm domain occupies 10 to 69 (DPFLNTLRKEHVPVSIYLVNGIKLQGQIESFDQYVVLLRNTVTQMVYKHAISTVVPARAV).

The protein belongs to the Hfq family. As to quaternary structure, homohexamer.

Functionally, RNA chaperone that binds small regulatory RNA (sRNAs) and mRNAs to facilitate mRNA translational regulation in response to envelope stress, environmental stress and changes in metabolite concentrations. Also binds with high specificity to tRNAs. The protein is RNA-binding protein Hfq of Bordetella bronchiseptica (strain ATCC BAA-588 / NCTC 13252 / RB50) (Alcaligenes bronchisepticus).